A 224-amino-acid polypeptide reads, in one-letter code: Thiamine-phosphate synthase (224 aa).

Residues 44-48 (QFREK) and asparagine 79 each bind 4-amino-2-methyl-5-(diphosphooxymethyl)pyrimidine. Mg(2+) contacts are provided by aspartate 80 and aspartate 99. 4-amino-2-methyl-5-(diphosphooxymethyl)pyrimidine is bound at residue serine 117. Residue 143-145 (TST) participates in 2-[(2R,5Z)-2-carboxy-4-methylthiazol-5(2H)-ylidene]ethyl phosphate binding. Lysine 146 contacts 4-amino-2-methyl-5-(diphosphooxymethyl)pyrimidine. 2-[(2R,5Z)-2-carboxy-4-methylthiazol-5(2H)-ylidene]ethyl phosphate-binding positions include glycine 175 and 195 to 196 (IS).

It belongs to the thiamine-phosphate synthase family. Mg(2+) is required as a cofactor.

The catalysed reaction is 2-[(2R,5Z)-2-carboxy-4-methylthiazol-5(2H)-ylidene]ethyl phosphate + 4-amino-2-methyl-5-(diphosphooxymethyl)pyrimidine + 2 H(+) = thiamine phosphate + CO2 + diphosphate. It carries out the reaction 2-(2-carboxy-4-methylthiazol-5-yl)ethyl phosphate + 4-amino-2-methyl-5-(diphosphooxymethyl)pyrimidine + 2 H(+) = thiamine phosphate + CO2 + diphosphate. The enzyme catalyses 4-methyl-5-(2-phosphooxyethyl)-thiazole + 4-amino-2-methyl-5-(diphosphooxymethyl)pyrimidine + H(+) = thiamine phosphate + diphosphate. The protein operates within cofactor biosynthesis; thiamine diphosphate biosynthesis; thiamine phosphate from 4-amino-2-methyl-5-diphosphomethylpyrimidine and 4-methyl-5-(2-phosphoethyl)-thiazole: step 1/1. Functionally, condenses 4-methyl-5-(beta-hydroxyethyl)thiazole monophosphate (THZ-P) and 2-methyl-4-amino-5-hydroxymethyl pyrimidine pyrophosphate (HMP-PP) to form thiamine monophosphate (TMP). The polypeptide is Thiamine-phosphate synthase (Bacillus cereus (strain ATCC 10987 / NRS 248)).